A 515-amino-acid polypeptide reads, in one-letter code: METLNVDHEDTISSEQEHRAHTKSDTDMPPISGGRDFIRQFAAESKKLWWLAGPAIFTSFCQYSLGAVTQILAGHVNTLALAAVSIQNSVISGFSVGIMLGMGSALATLCGQAYGAGQLEMMGIYLQRSWIILNSCALLLCLFYVFATPLLSLLGQSPEISKAAGKFSLWMIPQLFAYAVNFATAKFLQAQSKVIAMAVIAATVLLQHTLLSWLLMLKLRWGMAGGAVVLNMSWWLIDVTQIVYICGGSSGRAWSGLSWMAFKNLRGFARLSLASAVMVCLEVWYFMALILFAGYLKNPQVSVAALSICMNILGWPIMVAFGFNAAVSVRESNELGAEHPRRAKFLLIVAMITSVSIGIVISVTLIVLRDKYPAMFSDDEEVRVLVKQLTPLLALTIVINNIQPVLSGVAVGAGWQGIVAYVNIGCYYLCGIPIGLVLGYKMELGVKGIWTGMLTGTVVQTSVLLFIIYRTNWKKEASLAEARIKKWGDQSNKREEIDLCEEDENNSNGENNHRK.

Basic and acidic residues predominate over residues 1 to 26 (METLNVDHEDTISSEQEHRAHTKSDT). Positions 1-30 (METLNVDHEDTISSEQEHRAHTKSDTDMPP) are disordered. The next 12 helical transmembrane spans lie at 48–68 (LWWLAGPAIFTSFCQYSLGAV), 90–110 (VISGFSVGIMLGMGSALATLC), 131–151 (IILNSCALLLCLFYVFATPLL), 167–187 (FSLWMIPQLFAYAVNFATAKF), 194–214 (VIAMAVIAATVLLQHTLLSWL), 225–245 (GGAVVLNMSWWLIDVTQIVYI), 276–296 (AVMVCLEVWYFMALILFAGYL), 303–323 (VAALSICMNILGWPIMVAFGF), 347–367 (LIVAMITSVSIGIVISVTLIV), 392–412 (LLALTIVINNIQPVLSGVAVG), 418–438 (IVAYVNIGCYYLCGIPIGLVL), and 448–468 (GIWTGMLTGTVVQTSVLLFII). Residues 488–497 (GDQSNKREEI) show a composition bias toward basic and acidic residues. The segment at 488-515 (GDQSNKREEIDLCEEDENNSNGENNHRK) is disordered. A compositionally biased stretch (low complexity) spans 506–515 (NSNGENNHRK).

This sequence belongs to the multi antimicrobial extrusion (MATE) (TC 2.A.66.1) family.

Its subcellular location is the membrane. The protein is Protein DETOXIFICATION 32 of Arabidopsis thaliana (Mouse-ear cress).